We begin with the raw amino-acid sequence, 294 residues long: MLQITLPTHVHARLADYARLLRIDRPIGTLLLLWPTYWALWLAAEGGPSFANLVIFTLGVFFMRAAGCAINDFADRDWDRHVKRTKDRPLTAGRVRAWEAVALFAGLCLVSFLMVVLFTNTLTLYLSFGGALLAFIYPFMKRYTHLPQLFLGAAFSWAIPMAWAAEANQLSQLTWLLFTANVLWTVAYDTLYAMVDRDDDLKVGIKSTAILFGDADRAIIALLQTMVVVILVMVGQRAELGSFYYLGVVAMATLFVYHQYLARERNREGCFKAFLNNNWAGFAVFLGLALDLAF.

Transmembrane regions (helical) follow at residues 20–42, 98–118, 120–140, 145–165, 175–195, 218–238, 242–262, and 274–294; these read LLRIDRPIGTLLLLWPTYWALWL, WEAVALFAGLCLVSFLMVVLF, NTLTLYLSFGGALLAFIYPFM, HLPQLFLGAAFSWAIPMAWAA, WLLFTANVLWTVAYDTLYAMV, AIIALLQTMVVVILVMVGQRA, SFYYLGVVAMATLFVYHQYLA, and FLNNNWAGFAVFLGLALDLAF.

This sequence belongs to the UbiA prenyltransferase family. It depends on Mg(2+) as a cofactor.

Its subcellular location is the cell inner membrane. It carries out the reaction all-trans-octaprenyl diphosphate + 4-hydroxybenzoate = 4-hydroxy-3-(all-trans-octaprenyl)benzoate + diphosphate. It participates in cofactor biosynthesis; ubiquinone biosynthesis. Catalyzes the prenylation of para-hydroxybenzoate (PHB) with an all-trans polyprenyl group. Mediates the second step in the final reaction sequence of ubiquinone-8 (UQ-8) biosynthesis, which is the condensation of the polyisoprenoid side chain with PHB, generating the first membrane-bound Q intermediate 3-octaprenyl-4-hydroxybenzoate. The protein is 4-hydroxybenzoate octaprenyltransferase of Marinobacter nauticus (strain ATCC 700491 / DSM 11845 / VT8) (Marinobacter aquaeolei).